A 242-amino-acid chain; its full sequence is 1-(5-phosphoribosyl)-5-[(5-phosphoribosylamino)methylideneamino] imidazole-4-carboxamide isomerase (242 aa).

Catalysis depends on Asp8, which acts as the Proton acceptor. Asp129 (proton donor) is an active-site residue.

Belongs to the HisA/HisF family.

It localises to the cytoplasm. The catalysed reaction is 1-(5-phospho-beta-D-ribosyl)-5-[(5-phospho-beta-D-ribosylamino)methylideneamino]imidazole-4-carboxamide = 5-[(5-phospho-1-deoxy-D-ribulos-1-ylimino)methylamino]-1-(5-phospho-beta-D-ribosyl)imidazole-4-carboxamide. Its pathway is amino-acid biosynthesis; L-histidine biosynthesis; L-histidine from 5-phospho-alpha-D-ribose 1-diphosphate: step 4/9. The sequence is that of 1-(5-phosphoribosyl)-5-[(5-phosphoribosylamino)methylideneamino] imidazole-4-carboxamide isomerase from Maridesulfovibrio salexigens (strain ATCC 14822 / DSM 2638 / NCIMB 8403 / VKM B-1763) (Desulfovibrio salexigens).